The following is a 769-amino-acid chain: Scarecrow-like protein 14 (769 aa).

4 disordered regions span residues 1 to 23 (MGSY…DFDL), 128 to 157 (PSSS…GAFS), 279 to 320 (TEKK…ERSN), and 364 to 388 (TAQS…DSKK). Positions 384-765 (NDSKKETADL…RIVYASSLWV (382 aa)) constitute a GRAS domain. Residues 391-451 (ADLRTLLVLC…EARLAGTGTQ (61 aa)) form a leucine repeat I (LRI) region. The tract at residues 470–536 (YQTYMSVCPF…GGSPKLRITG (67 aa)) is VHIID. The short motif at 501–505 (IHIID) is the VHIID element. The segment at 552 to 584 (ETGHRLARYCQRHNVPFEYNAIAQKWETIQVED) is leucine repeat II (LRII). The interval 593-687 (VVVNSLFRFR…KEFYGREIVN (95 aa)) is PFYRE. The SAW stretch occupies residues 690-765 (ACEGTERVER…RIVYASSLWV (76 aa)).

It belongs to the GRAS family. In terms of tissue distribution, expressed in roots, shoots, flowers and siliques.

Its subcellular location is the nucleus. Functionally, probable transcription factor involved in plant development. The sequence is that of Scarecrow-like protein 14 (SCL14) from Arabidopsis thaliana (Mouse-ear cress).